A 94-amino-acid polypeptide reads, in one-letter code: Large ribosomal subunit protein bL27 (94 aa).

Positions 1–9 (MNLANLQLF) are excised as a propeptide. The segment at 11–33 (HKKGGGSTSNGRDSQAKRLGAKA) is disordered.

Belongs to the bacterial ribosomal protein bL27 family. In terms of processing, the N-terminus is cleaved by ribosomal processing cysteine protease Prp.

This Streptococcus agalactiae serotype V (strain ATCC BAA-611 / 2603 V/R) protein is Large ribosomal subunit protein bL27.